We begin with the raw amino-acid sequence, 219 residues long: ATP-dependent dethiobiotin synthetase BioD (219 aa).

12–17 provides a ligand contact to ATP; sequence EVGKTY. Thr-16 is a Mg(2+) binding site. Residue Lys-37 is part of the active site. Ser-41 contacts substrate. Residues Asp-52, 114–117, and 174–175 each bind ATP; these read EGAG and NC. Mg(2+) is bound by residues Asp-52 and Glu-114.

This sequence belongs to the dethiobiotin synthetase family. Homodimer. Mg(2+) serves as cofactor.

It localises to the cytoplasm. It carries out the reaction (7R,8S)-7,8-diammoniononanoate + CO2 + ATP = (4R,5S)-dethiobiotin + ADP + phosphate + 3 H(+). Its pathway is cofactor biosynthesis; biotin biosynthesis; biotin from 7,8-diaminononanoate: step 1/2. In terms of biological role, catalyzes a mechanistically unusual reaction, the ATP-dependent insertion of CO2 between the N7 and N8 nitrogen atoms of 7,8-diaminopelargonic acid (DAPA, also called 7,8-diammoniononanoate) to form a ureido ring. This is ATP-dependent dethiobiotin synthetase BioD from Francisella tularensis subsp. holarctica (strain FTNF002-00 / FTA).